Reading from the N-terminus, the 227-residue chain is Cytidylate kinase (227 aa).

Position 10-18 (10-18 (GPASSGKST)) interacts with ATP.

It belongs to the cytidylate kinase family. Type 1 subfamily.

It is found in the cytoplasm. It catalyses the reaction CMP + ATP = CDP + ADP. It carries out the reaction dCMP + ATP = dCDP + ADP. This Streptococcus agalactiae serotype V (strain ATCC BAA-611 / 2603 V/R) protein is Cytidylate kinase.